We begin with the raw amino-acid sequence, 112 residues long: UPF0102 protein CFF8240_0294 (112 aa).

The protein belongs to the UPF0102 family.

In Campylobacter fetus subsp. fetus (strain 82-40), this protein is UPF0102 protein CFF8240_0294.